The primary structure comprises 652 residues: Anaphase-promoting complex subunit 4 (652 aa).

As to quaternary structure, the APC/C is composed of at least 13 subunits that stay tightly associated throughout the cell cycle: APC1, APC2, APC4, APC5, APC9, APC11, CDC16, CDC23, CDC26, CDC27, DOC1, MND2 and SWM1.

The protein resides in the cytoplasm. Its subcellular location is the nucleus. The protein operates within protein modification; protein ubiquitination. Its function is as follows. Component of the anaphase promoting complex/cyclosome (APC/C), a cell cycle-regulated E3 ubiquitin-protein ligase complex that controls progression through mitosis and the G1 phase of the cell cycle. The APC/C is thought to confer substrate specificity and, in the presence of ubiquitin-conjugating E2 enzymes, it catalyzes the formation of protein-ubiquitin conjugates that are subsequently degraded by the 26S proteasome. In early mitosis, the APC/C is activated by CDC20 and targets securin PDS1, the B-type cyclin CLB5, and other anaphase inhibitory proteins for proteolysis, thereby triggering the separation of sister chromatids at the metaphase-to-anaphase transition. In late mitosis and in G1, degradation of CLB5 allows activation of the APC/C by CDH1, which is needed to destroy CDC20 and the B-type cyclin CLB2 to allow exit from mitosis and creating the low CDK state necessary for cytokinesis and for reforming prereplicative complexes in G1 prior to another round of replication. The sequence is that of Anaphase-promoting complex subunit 4 (APC4) from Saccharomyces cerevisiae (strain ATCC 204508 / S288c) (Baker's yeast).